A 286-amino-acid polypeptide reads, in one-letter code: Dolichyl-diphosphooligosaccharide--protein glycosyltransferase subunit SWP1 (286 aa).

The signal sequence occupies residues 1–19 (MQFFKTLAALVSCISFVLA). Residues 20–194 (YVAQDVHVSF…HAEPKRVAKP (175 aa)) are Lumenal-facing. A helical membrane pass occupies residues 195-215 (IAVIFVLIIFITILSLIVTWL). Residues 216-228 (NSCAAAFNNIPTG) lie on the Cytoplasmic side of the membrane. The helical transmembrane segment at 229-249 (VTAVYFLGFIATIVGFEVIFA) threads the bilayer. Over 250–252 (RYY) the chain is Lumenal. A helical membrane pass occupies residues 253 to 273 (LGTSIFETLFSSLYLGAPGLL). Topologically, residues 274–286 (TSTKFLRSFGQTI) are cytoplasmic.

The protein belongs to the SWP1 family. Component of the oligosaccharyltransferase (OST) complex, which appears to exist in two assemblies comprising OST1, OST2, OST4, OST5, STT3, SWP1, WPB1, and either OST3 or OST6. OST assembly occurs through the formation of 3 subcomplexes. Subcomplex 1 contains OST1 and OST5, subcomplex 2 contains STT3, OST3, and OST4, and subcomplex 3 contains OST2, WBP1, and SWP1. Interacts with SEC61 and SSS1.

The protein resides in the endoplasmic reticulum membrane. It participates in protein modification; protein glycosylation. In terms of biological role, subunit of the oligosaccharyl transferase (OST) complex that catalyzes the initial transfer of a defined glycan (Glc(3)Man(9)GlcNAc(2) in eukaryotes) from the lipid carrier dolichol-pyrophosphate to an asparagine residue within an Asn-X-Ser/Thr consensus motif in nascent polypeptide chains, the first step in protein N-glycosylation. N-glycosylation occurs cotranslationally and the complex associates with the Sec61 complex at the channel-forming translocon complex that mediates protein translocation across the endoplasmic reticulum (ER). All subunits are required for a maximal enzyme activity. The polypeptide is Dolichyl-diphosphooligosaccharide--protein glycosyltransferase subunit SWP1 (SWP1) (Saccharomyces cerevisiae (strain ATCC 204508 / S288c) (Baker's yeast)).